The sequence spans 374 residues: tRNA-specific 2-thiouridylase MnmA (374 aa).

Residues 12–19 (GMSGGVDS) and methionine 38 contribute to the ATP site. The segment at 98–100 (NPD) is interaction with target base in tRNA. Cysteine 103 (nucleophile) is an active-site residue. Residues cysteine 103 and cysteine 207 are joined by a disulfide bond. Glycine 128 lines the ATP pocket. The interval 157-159 (KDQ) is interaction with tRNA. Catalysis depends on cysteine 207, which acts as the Cysteine persulfide intermediate. The interaction with tRNA stretch occupies residues 321 to 322 (RY).

Belongs to the MnmA/TRMU family.

The protein localises to the cytoplasm. It carries out the reaction S-sulfanyl-L-cysteinyl-[protein] + uridine(34) in tRNA + AH2 + ATP = 2-thiouridine(34) in tRNA + L-cysteinyl-[protein] + A + AMP + diphosphate + H(+). Functionally, catalyzes the 2-thiolation of uridine at the wobble position (U34) of tRNA, leading to the formation of s(2)U34. The sequence is that of tRNA-specific 2-thiouridylase MnmA from Aliivibrio fischeri (strain MJ11) (Vibrio fischeri).